The primary structure comprises 98 residues: NADH-ubiquinone oxidoreductase chain 4L (98 aa).

The next 3 helical transmembrane spans lie at 1–21 (MTMV…GLLM), 29–49 (SLLC…VTIL), and 61–81 (IILL…LVMV).

The protein belongs to the complex I subunit 4L family. As to quaternary structure, core subunit of respiratory chain NADH dehydrogenase (Complex I) which is composed of 45 different subunits.

The protein localises to the mitochondrion inner membrane. It catalyses the reaction a ubiquinone + NADH + 5 H(+)(in) = a ubiquinol + NAD(+) + 4 H(+)(out). In terms of biological role, core subunit of the mitochondrial membrane respiratory chain NADH dehydrogenase (Complex I) which catalyzes electron transfer from NADH through the respiratory chain, using ubiquinone as an electron acceptor. Part of the enzyme membrane arm which is embedded in the lipid bilayer and involved in proton translocation. In Leptonychotes weddellii (Weddell seal), this protein is NADH-ubiquinone oxidoreductase chain 4L (MT-ND4L).